The primary structure comprises 1104 residues: Inhibitory regulator protein BUD2/CLA2 (1104 aa).

Residue S2 is modified to N-acetylserine. Positions 316 to 444 constitute a C2 domain; that stretch reads RSEYLSITGS…RYNKETRLPI (129 aa). Positions 536-753 constitute a Ras-GAP domain; the sequence is AKIDGTVSRI…NDLLDYIDKM (218 aa). S854 is modified (phosphoserine). The segment at 1027-1104 is disordered; sequence NPKSSNKTSV…FKKKKETGGS (78 aa). Polar residues-rich tracts occupy residues 1029–1043 and 1052–1069; these read KSSN…SSEN and LPNS…SPTK. Basic residues predominate over residues 1090–1104; sequence KLTRWFKKKKETGGS.

In terms of biological role, stimulates the GTPase activity of BUD1/RSR1. Participates in the regulation of bud-site selection. The sequence is that of Inhibitory regulator protein BUD2/CLA2 (BUD2) from Saccharomyces cerevisiae (strain ATCC 204508 / S288c) (Baker's yeast).